Here is a 283-residue protein sequence, read N- to C-terminus: 4-hydroxybenzoate octaprenyltransferase (283 aa).

9 helical membrane passes run 16–36, 40–60, 85–105, 108–128, 135–155, 160–180, 204–224, 226–246, and 263–283; these read PIGT…AGAG, LRIV…GCVI, ISAT…FGLV, LNTE…LYPF, LPQI…FTAL, WFIA…YDTE, FDRL…GWIL, LITV…LFAY, and FLHN…HYWF.

Belongs to the UbiA prenyltransferase family. Mg(2+) serves as cofactor.

The protein resides in the cell inner membrane. The enzyme catalyses all-trans-octaprenyl diphosphate + 4-hydroxybenzoate = 4-hydroxy-3-(all-trans-octaprenyl)benzoate + diphosphate. It participates in cofactor biosynthesis; ubiquinone biosynthesis. In terms of biological role, catalyzes the prenylation of para-hydroxybenzoate (PHB) with an all-trans polyprenyl group. Mediates the second step in the final reaction sequence of ubiquinone-8 (UQ-8) biosynthesis, which is the condensation of the polyisoprenoid side chain with PHB, generating the first membrane-bound Q intermediate 3-octaprenyl-4-hydroxybenzoate. The polypeptide is 4-hydroxybenzoate octaprenyltransferase (Idiomarina loihiensis (strain ATCC BAA-735 / DSM 15497 / L2-TR)).